The sequence spans 275 residues: 4-diphosphocytidyl-2-C-methyl-D-erythritol kinase (275 aa).

Lysine 14 is an active-site residue. 98–108 contributes to the ATP binding site; it reads PMGAGLGGGSS. The active site involves aspartate 140.

The protein belongs to the GHMP kinase family. IspE subfamily.

The catalysed reaction is 4-CDP-2-C-methyl-D-erythritol + ATP = 4-CDP-2-C-methyl-D-erythritol 2-phosphate + ADP + H(+). The protein operates within isoprenoid biosynthesis; isopentenyl diphosphate biosynthesis via DXP pathway; isopentenyl diphosphate from 1-deoxy-D-xylulose 5-phosphate: step 3/6. Its function is as follows. Catalyzes the phosphorylation of the position 2 hydroxy group of 4-diphosphocytidyl-2C-methyl-D-erythritol. The protein is 4-diphosphocytidyl-2-C-methyl-D-erythritol kinase of Francisella philomiragia subsp. philomiragia (strain ATCC 25017 / CCUG 19701 / FSC 153 / O#319-036).